The chain runs to 460 residues: MTWSILRYLRENPDILKDSMRKRGLDPSVIDEAKRVDEEWRKLKRQVDEIRHRHNVITRQIASARDPEERRKLIEEARRLLAEREELEKKLKALEEERERILLSLPNIVHDSVPVGFSDEENVPIRFWGRPRVYRGHLDAFKAQTERWGFKVDYELIDWKPVGHADMLEYVLKLGNTMKAAEVAGSRFYYLFDDIVWLDFALLLYAIDRLTQKGYRLVLPPYMIRHKILMGVIDMETFKDAIYKVEDEDLYLIATAEHPLAGLYYNEEIMEDELPIKLVGISPCFRKEAGAGNRDLKGIFRVHQFHKVEQFVYAKPEESWDILEELIRNAEELFQGLGLPYRVVNVVSGELGAPAAKKYDLEVWMPAQGKYREMVSASNTTDWQSYRLNIRLVRKKDMKREYVHTLNSTAIASTRTITAILENFQEPDGTVVIPKVLRKYLEIFPKAPKDAIHPVKKVRG.

L-serine is bound at residue 255–257 (TAE). ATP contacts are provided by residues 286-288 (RKE) and valine 302. An L-serine-binding site is contributed by glutamate 309. 373 to 376 (EMVS) contributes to the ATP binding site. Position 409 (threonine 409) interacts with L-serine.

The protein belongs to the class-II aminoacyl-tRNA synthetase family. Type-1 seryl-tRNA synthetase subfamily. As to quaternary structure, homodimer. The tRNA molecule binds across the dimer.

Its subcellular location is the cytoplasm. The catalysed reaction is tRNA(Ser) + L-serine + ATP = L-seryl-tRNA(Ser) + AMP + diphosphate + H(+). It carries out the reaction tRNA(Sec) + L-serine + ATP = L-seryl-tRNA(Sec) + AMP + diphosphate + H(+). Its pathway is aminoacyl-tRNA biosynthesis; selenocysteinyl-tRNA(Sec) biosynthesis; L-seryl-tRNA(Sec) from L-serine and tRNA(Sec): step 1/1. Catalyzes the attachment of serine to tRNA(Ser). Is also able to aminoacylate tRNA(Sec) with serine, to form the misacylated tRNA L-seryl-tRNA(Sec), which will be further converted into selenocysteinyl-tRNA(Sec). This is Serine--tRNA ligase from Hyperthermus butylicus (strain DSM 5456 / JCM 9403 / PLM1-5).